The sequence spans 231 residues: Mediator of RNA polymerase II transcription subunit 18 (231 aa).

Residues 191 to 218 adopt a coiled-coil conformation; sequence HLTDIEALNKAVKELEKVKTELHGLMNL.

It belongs to the Mediator complex subunit 18 family. In terms of assembly, component of the Mediator complex.

The protein resides in the nucleus. Its function is as follows. Component of the Mediator complex, a coactivator involved in the regulated transcription of nearly all RNA polymerase II-dependent genes. Mediator functions as a bridge to convey information from gene-specific regulatory proteins to the basal RNA polymerase II transcription machinery. Mediator is recruited to promoters by direct interactions with regulatory proteins and serves as a scaffold for the assembly of a functional preinitiation complex with RNA polymerase II and the general transcription factors. The protein is Mediator of RNA polymerase II transcription subunit 18 (SRB5) of Yarrowia lipolytica (strain CLIB 122 / E 150) (Yeast).